Reading from the N-terminus, the 427-residue chain is Histidine--tRNA ligase (427 aa).

Belongs to the class-II aminoacyl-tRNA synthetase family. In terms of assembly, homodimer.

The protein resides in the cytoplasm. The catalysed reaction is tRNA(His) + L-histidine + ATP = L-histidyl-tRNA(His) + AMP + diphosphate + H(+). The polypeptide is Histidine--tRNA ligase (Proteus mirabilis (strain HI4320)).